The chain runs to 439 residues: Protein disulfide-isomerase A6 (439 aa).

The signal sequence occupies residues 1–19 (MARLGFGLVSCTFFLAASG). Thioredoxin domains follow at residues 20–133 (LYSS…ALRQ) and 151–287 (QGRG…EDVA). Residues Cys-55 and Cys-58 each act as nucleophile in the active site. Cys-55 and Cys-58 are joined by a disulfide. 3 positions are modified to phosphoserine: Ser-129, Ser-156, and Ser-158. Residues 141 to 160 (GRSGGYSSGKQGRGDSSSKK) are disordered. Catalysis depends on nucleophile residues Cys-190 and Cys-193. The cysteines at positions 190 and 193 are disulfide-linked. The tract at residues 400–425 (GSFPAITAREPWDGRDGELPVEDDID) is disordered. At Ser-427 the chain carries Phosphoserine. The short motif at 436–439 (KDEL) is the Prevents secretion from ER element.

This sequence belongs to the protein disulfide isomerase family. Part of a large chaperone multiprotein complex comprising DNAJB11, HSP90B1, HSPA5, HYOU, PDIA2, PDIA4, PDIA6, PPIB, SDF2L1, UGGT1 and very small amounts of ERP29, but not, or at very low levels, CALR nor CANX. Interacts with MICA on the surface of tumor cells, leading to MICA disulfide bond reduction which is required for its release from tumor cells. Interacts with ITGB3 following platelet stimulation. Interacts with ERN1; the interaction is direct. Interacts with EIF2AK3. As to expression, expressed most abundantly in lung and kidney, followed by heart, liver and brain.

It is found in the endoplasmic reticulum lumen. The protein localises to the cell membrane. The protein resides in the melanosome. It catalyses the reaction Catalyzes the rearrangement of -S-S- bonds in proteins.. Functionally, may function as a chaperone that inhibits aggregation of misfolded proteins. Negatively regulates the unfolded protein response (UPR) through binding to UPR sensors such as ERN1, which in turn inactivates ERN1 signaling. May also regulate the UPR via the EIF2AK3 UPR sensor. Plays a role in platelet aggregation and activation by agonists such as convulxin, collagen and thrombin. The protein is Protein disulfide-isomerase A6 (PDIA6) of Mesocricetus auratus (Golden hamster).